The following is a 1163-amino-acid chain: GTPase-activating protein (1163 aa).

C2 domains are found at residues 26–148 (PSSN…DHWF) and 261–419 (TTST…SAWY). The Ras-GAP domain maps to 520–737 (ERIAPIIKAL…DAVKHFLEVI (218 aa)). The PH domain occupies 762–860 (LKEGLMTKYP…WFDLLHKICL (99 aa)). The Btk-type zinc finger occupies 862 to 898 (NSIRMQYFHPSAFVSGFYSCCGRSDENSPGCKKVLDK). Zn(2+) contacts are provided by H870, C881, C882, and C892. 2 disordered regions span residues 1026–1051 (LNQQHHQQQQHQQQQQQQQQQQLQQF) and 1091–1163 (PFHQ…PPIY). Residues 1091–1157 (PFHQQQQQHH…APPSTTSSSQ (67 aa)) are compositionally biased toward low complexity.

As to quaternary structure, interacts with sty. As to expression, in third instar larvae eye imaginal disk, expressed in cells posterior to the morphogenetic furrow, in all photoreceptor and cone cell precursors as well as in still uncommitted cells.

In terms of biological role, inhibitory regulator of the Ras-cyclic AMP pathway. May function as a negative regulator of Ras85D/Ras1 in the sev signaling pathway. Acts cell autonomously in cone cell precursors as a negative regulator of R7 photoreceptor cell determination. The polypeptide is GTPase-activating protein (RasGAP1) (Drosophila melanogaster (Fruit fly)).